The primary structure comprises 455 residues: Chromosomal replication initiator protein DnaA (455 aa).

The segment at Met-1 to Tyr-73 is domain I, interacts with DnaA modulators. The tract at residues Tyr-73–Asn-114 is domain II. The tract at residues Gln-115–Ile-331 is domain III, AAA+ region. Residues Gly-159, Gly-161, Lys-162, and Thr-163 each contribute to the ATP site. The segment at Ser-332 to Asn-455 is domain IV, binds dsDNA.

The protein belongs to the DnaA family. In terms of assembly, oligomerizes as a right-handed, spiral filament on DNA at oriC.

The protein localises to the cytoplasm. Functionally, plays an essential role in the initiation and regulation of chromosomal replication. ATP-DnaA binds to the origin of replication (oriC) to initiate formation of the DNA replication initiation complex once per cell cycle. Binds the DnaA box (a 9 base pair repeat at the origin) and separates the double-stranded (ds)DNA. Forms a right-handed helical filament on oriC DNA; dsDNA binds to the exterior of the filament while single-stranded (ss)DNA is stabiized in the filament's interior. The ATP-DnaA-oriC complex binds and stabilizes one strand of the AT-rich DNA unwinding element (DUE), permitting loading of DNA polymerase. After initiation quickly degrades to an ADP-DnaA complex that is not apt for DNA replication. Binds acidic phospholipids. The polypeptide is Chromosomal replication initiator protein DnaA (Crocosphaera subtropica (strain ATCC 51142 / BH68) (Cyanothece sp. (strain ATCC 51142))).